A 121-amino-acid chain; its full sequence is MGCASAKHVATVQNEEEAQKGKNYQNGDVFGDEYRIKPVEEVKYMKNGAEEEQKIAARNQENLEKSASSNVRLKTNKEVPGLVHQPRANMHISESQQEFFRMLDEKIEKGRDYCSEEEDIT.

2 disordered regions span residues 1 to 28 (MGCASAKHVATVQNEEEAQKGKNYQNGD) and 60 to 82 (QENLEKSASSNVRLKTNKEVPGL). 2 positions are modified to phosphoserine: serine 95 and serine 115.

Expressed in spleen, prostate, testis and uterus.

This is an uncharacterized protein from Homo sapiens (Human).